A 257-amino-acid polypeptide reads, in one-letter code: MSKLKLNDVNIYYGDFHAVQNVNLEVPARSVTAFIGPSGCGKSTVLRSINRMHEVIPGAYVEGEILLDGENIYGPKIDPVAVRNTIGMVFQKANPFPTMSIEDNVVAGLRLSGEKNKKKLKEVAEQSLRGANLWEEVKDRLDKPGGGLSGGQQQRLCIARAIAVKPEVLLMDEPCSALDPISTLAVEDLIHELKEEFTIVIVTHNMQQAARVSDQTAFYSLEATGKPGRLVELGPTKKIFENPDNKETEDYISGRFG.

The ABC transporter domain occupies 4–252; sequence LKLNDVNIYY…PDNKETEDYI (249 aa). 36–43 is a binding site for ATP; the sequence is GPSGCGKS.

This sequence belongs to the ABC transporter superfamily. Phosphate importer (TC 3.A.1.7) family. As to quaternary structure, the complex is composed of two ATP-binding proteins (PstB), two transmembrane proteins (PstC and PstA) and a solute-binding protein (PstS).

Its subcellular location is the cell membrane. The enzyme catalyses phosphate(out) + ATP + H2O = ADP + 2 phosphate(in) + H(+). Its function is as follows. Part of the ABC transporter complex PstSACB involved in phosphate import. Responsible for energy coupling to the transport system. The sequence is that of Phosphate import ATP-binding protein PstB from Corynebacterium efficiens (strain DSM 44549 / YS-314 / AJ 12310 / JCM 11189 / NBRC 100395).